The chain runs to 738 residues: LPS-assembly protein LptD (738 aa).

The N-terminal stretch at 1–26 (MEHKRNNILLAGLFFLLLGLVSIARA) is a signal peptide.

Belongs to the LptD family. Component of the lipopolysaccharide transport and assembly complex. Interacts with LptE and LptA.

It is found in the cell outer membrane. Functionally, together with LptE, is involved in the assembly of lipopolysaccharide (LPS) at the surface of the outer membrane. The polypeptide is LPS-assembly protein LptD (Nitrosococcus oceani (strain ATCC 19707 / BCRC 17464 / JCM 30415 / NCIMB 11848 / C-107)).